The following is a 346-amino-acid chain: N-acetyl-gamma-glutamyl-phosphate reductase (346 aa).

Residue C149 is part of the active site.

The protein belongs to the NAGSA dehydrogenase family. Type 1 subfamily.

It localises to the cytoplasm. The catalysed reaction is N-acetyl-L-glutamate 5-semialdehyde + phosphate + NADP(+) = N-acetyl-L-glutamyl 5-phosphate + NADPH + H(+). The protein operates within amino-acid biosynthesis; L-arginine biosynthesis; N(2)-acetyl-L-ornithine from L-glutamate: step 3/4. Functionally, catalyzes the NADPH-dependent reduction of N-acetyl-5-glutamyl phosphate to yield N-acetyl-L-glutamate 5-semialdehyde. This Geobacter sp. (strain M21) protein is N-acetyl-gamma-glutamyl-phosphate reductase.